The chain runs to 297 residues: Acetyl-coenzyme A carboxylase carboxyl transferase subunit beta (297 aa).

The CoA carboxyltransferase N-terminal domain maps to L27–V296. Zn(2+) contacts are provided by C31, C34, C50, and C53. The C4-type zinc finger occupies C31 to C53.

Belongs to the AccD/PCCB family. Acetyl-CoA carboxylase is a heterohexamer composed of biotin carboxyl carrier protein (AccB), biotin carboxylase (AccC) and two subunits each of ACCase subunit alpha (AccA) and ACCase subunit beta (AccD). Zn(2+) is required as a cofactor.

It is found in the cytoplasm. It catalyses the reaction N(6)-carboxybiotinyl-L-lysyl-[protein] + acetyl-CoA = N(6)-biotinyl-L-lysyl-[protein] + malonyl-CoA. It participates in lipid metabolism; malonyl-CoA biosynthesis; malonyl-CoA from acetyl-CoA: step 1/1. In terms of biological role, component of the acetyl coenzyme A carboxylase (ACC) complex. Biotin carboxylase (BC) catalyzes the carboxylation of biotin on its carrier protein (BCCP) and then the CO(2) group is transferred by the transcarboxylase to acetyl-CoA to form malonyl-CoA. The protein is Acetyl-coenzyme A carboxylase carboxyl transferase subunit beta of Pseudomonas putida (strain ATCC 700007 / DSM 6899 / JCM 31910 / BCRC 17059 / LMG 24140 / F1).